The following is a 286-amino-acid chain: Phosphatidylserine decarboxylase proenzyme (286 aa).

Catalysis depends on charge relay system; for autoendoproteolytic cleavage activity residues Asp-91, His-148, and Ser-251. The active-site Schiff-base intermediate with substrate; via pyruvic acid; for decarboxylase activity is the Ser-251. A Pyruvic acid (Ser); by autocatalysis modification is found at Ser-251.

It belongs to the phosphatidylserine decarboxylase family. PSD-B subfamily. Prokaryotic type I sub-subfamily. Heterodimer of a large membrane-associated beta subunit and a small pyruvoyl-containing alpha subunit. It depends on pyruvate as a cofactor. Is synthesized initially as an inactive proenzyme. Formation of the active enzyme involves a self-maturation process in which the active site pyruvoyl group is generated from an internal serine residue via an autocatalytic post-translational modification. Two non-identical subunits are generated from the proenzyme in this reaction, and the pyruvate is formed at the N-terminus of the alpha chain, which is derived from the carboxyl end of the proenzyme. The autoendoproteolytic cleavage occurs by a canonical serine protease mechanism, in which the side chain hydroxyl group of the serine supplies its oxygen atom to form the C-terminus of the beta chain, while the remainder of the serine residue undergoes an oxidative deamination to produce ammonia and the pyruvoyl prosthetic group on the alpha chain. During this reaction, the Ser that is part of the protease active site of the proenzyme becomes the pyruvoyl prosthetic group, which constitutes an essential element of the active site of the mature decarboxylase.

It localises to the cell membrane. The catalysed reaction is a 1,2-diacyl-sn-glycero-3-phospho-L-serine + H(+) = a 1,2-diacyl-sn-glycero-3-phosphoethanolamine + CO2. Its pathway is phospholipid metabolism; phosphatidylethanolamine biosynthesis; phosphatidylethanolamine from CDP-diacylglycerol: step 2/2. Functionally, catalyzes the formation of phosphatidylethanolamine (PtdEtn) from phosphatidylserine (PtdSer). The chain is Phosphatidylserine decarboxylase proenzyme from Marinobacter nauticus (strain ATCC 700491 / DSM 11845 / VT8) (Marinobacter aquaeolei).